We begin with the raw amino-acid sequence, 145 residues long: Large ribosomal subunit protein uL16 (145 aa).

It belongs to the universal ribosomal protein uL16 family. Part of the 50S ribosomal subunit.

In terms of biological role, binds 23S rRNA and is also seen to make contacts with the A and possibly P site tRNAs. In Exiguobacterium sp. (strain ATCC BAA-1283 / AT1b), this protein is Large ribosomal subunit protein uL16.